The following is a 112-amino-acid chain: Type III inner-rod protein PscI (112 aa).

It belongs to the YscI/HrpB family. Homomultimer (through its C-terminal region).

Functionally, component of the type III secretion (T3S) injectisome that translocates effector toxins into host cells, facilitating the establishment and dissemination of infection. Polymerizes into flexible and regularly twisted fibrils and plays an essential role in needle assembly. This chain is Type III inner-rod protein PscI (pscI), found in Pseudomonas aeruginosa (strain ATCC 15692 / DSM 22644 / CIP 104116 / JCM 14847 / LMG 12228 / 1C / PRS 101 / PAO1).